A 134-amino-acid polypeptide reads, in one-letter code: Prefoldin subunit 4 (134 aa).

Alanine 2 is modified (N-acetylalanine). Serine 125 bears the Phosphoserine mark.

The protein belongs to the prefoldin subunit beta family. As to quaternary structure, heterohexamer of two PFD-alpha type and four PFD-beta type subunits. Interacts with URI1; the interaction is phosphorylation-dependent and occurs in a growth-dependent manner.

It localises to the nucleus. The protein resides in the cytoplasm. It is found in the mitochondrion. Binds specifically to cytosolic chaperonin (c-CPN) and transfers target proteins to it. Binds to nascent polypeptide chain and promotes folding in an environment in which there are many competing pathways for nonnative proteins. The chain is Prefoldin subunit 4 (PFDN4) from Bos taurus (Bovine).